A 124-amino-acid chain; its full sequence is Iron-sulfur cluster insertion protein ErpA (124 aa).

3 residues coordinate iron-sulfur cluster: Cys-52, Cys-116, and Cys-118.

It belongs to the HesB/IscA family. In terms of assembly, homodimer. The cofactor is iron-sulfur cluster.

In terms of biological role, required for insertion of 4Fe-4S clusters for at least IspG. This Acidithiobacillus ferrooxidans (strain ATCC 23270 / DSM 14882 / CIP 104768 / NCIMB 8455) (Ferrobacillus ferrooxidans (strain ATCC 23270)) protein is Iron-sulfur cluster insertion protein ErpA.